The following is a 213-amino-acid chain: Orotate phosphoribosyltransferase (213 aa).

5-phospho-alpha-D-ribose 1-diphosphate is bound at residue lysine 26. 34–35 (FF) serves as a coordination point for orotate. Residues 72 to 73 (YK), arginine 99, lysine 100, lysine 103, histidine 105, and 124 to 132 (DDVITAGTA) each bind 5-phospho-alpha-D-ribose 1-diphosphate. 2 residues coordinate orotate: threonine 128 and arginine 156.

It belongs to the purine/pyrimidine phosphoribosyltransferase family. PyrE subfamily. Homodimer. Requires Mg(2+) as cofactor.

The catalysed reaction is orotidine 5'-phosphate + diphosphate = orotate + 5-phospho-alpha-D-ribose 1-diphosphate. Its pathway is pyrimidine metabolism; UMP biosynthesis via de novo pathway; UMP from orotate: step 1/2. Functionally, catalyzes the transfer of a ribosyl phosphate group from 5-phosphoribose 1-diphosphate to orotate, leading to the formation of orotidine monophosphate (OMP). The protein is Orotate phosphoribosyltransferase of Shigella sonnei (strain Ss046).